The primary structure comprises 625 residues: pH-response transcription factor pacC/RIM101 (625 aa).

The segment covering 1–34 has biased composition (low complexity); that stretch reads MSSQDQQQQQQPAQTQTSTSSSSNNENATTATSS. The tract at residues 1–35 is disordered; that stretch reads MSSQDQQQQQQPAQTQTSTSSSSNNENATTATSSI. 3 consecutive C2H2-type zinc fingers follow at residues 45–70, 81–105, and 111–133; these read LLCQ…CEKH, LTCG…IRVH, and HKCE…VKTH. Over residues 391-416 the composition is skewed to polar residues; that stretch reads APMTATHSSHSVSSGTPALTPPSSSV. Residues 391 to 440 are disordered; sequence APMTATHSSHSVSSGTPALTPPSSSVSYTSGNSPMSSSGMSPISRHSSTS. Positions 417-438 are enriched in low complexity; the sequence is SYTSGNSPMSSSGMSPISRHSS. The short motif at 444-447 is the YPX[LI] motif 1 element; it reads YPNL. 2 disordered regions span residues 455-543 and 584-625; these read SPHH…SPSV and VKDE…DDDE. Polar residues-rich tracts occupy residues 461–472 and 490–514; these read TAPTSTLGTNFD and GLNS…SPKE. The short motif at 615–618 is the YPX[LI] motif 2 element; sequence YPVL.

The protein belongs to the pacC/RIM101 family. In terms of processing, activated by C-terminal proteolytic cleavage by signaling protease (probably palB/RIM13) at neutral to alkaline ambient pH.

The protein localises to the cytoplasm. Its subcellular location is the nucleus. Its function is as follows. Transcription factor that mediates regulation of both acid- and alkaline-expressed genes in response to ambient pH. At alkaline ambient pH, activates transcription of alkaline-expressed genes (including pac1 itself) and represses transcription of acid-expressed genes. The polypeptide is pH-response transcription factor pacC/RIM101 (pac1) (Sclerotinia sclerotiorum (White mold)).